The chain runs to 257 residues: NAD-capped RNA hydrolase NudC (257 aa).

Position 69 (Arg-69) interacts with substrate. Residues Cys-98 and Cys-101 each contribute to the Zn(2+) site. Glu-111 provides a ligand contact to substrate. Residues Cys-116 and Cys-119 each coordinate Zn(2+). Residue Tyr-124 coordinates substrate. A Nudix hydrolase domain is found at 125–248 (PQIAPCIIVA…TVARRLIEDT (124 aa)). Positions 158, 174, and 178 each coordinate a divalent metal cation. Positions 159–180 (GFVEVGETLEQAVAREVMEESG) match the Nudix box motif. 192 to 199 (QPWPFPQS) contributes to the substrate binding site. Glu-219 serves as a coordination point for a divalent metal cation. A substrate-binding site is contributed by Ala-241.

The protein belongs to the Nudix hydrolase family. NudC subfamily. In terms of assembly, homodimer. The cofactor is Mg(2+). Mn(2+) is required as a cofactor. Zn(2+) serves as cofactor.

The catalysed reaction is a 5'-end NAD(+)-phospho-ribonucleoside in mRNA + H2O = a 5'-end phospho-adenosine-phospho-ribonucleoside in mRNA + beta-nicotinamide D-ribonucleotide + 2 H(+). The enzyme catalyses NAD(+) + H2O = beta-nicotinamide D-ribonucleotide + AMP + 2 H(+). It carries out the reaction NADH + H2O = reduced beta-nicotinamide D-ribonucleotide + AMP + 2 H(+). MRNA decapping enzyme that specifically removes the nicotinamide adenine dinucleotide (NAD) cap from a subset of mRNAs by hydrolyzing the diphosphate linkage to produce nicotinamide mononucleotide (NMN) and 5' monophosphate mRNA. The NAD-cap is present at the 5'-end of some mRNAs and stabilizes RNA against 5'-processing. Has preference for mRNAs with a 5'-end purine. Catalyzes the hydrolysis of a broad range of dinucleotide pyrophosphates. The chain is NAD-capped RNA hydrolase NudC from Salmonella typhimurium (strain LT2 / SGSC1412 / ATCC 700720).